A 384-amino-acid chain; its full sequence is GDP-mannose transporter (384 aa).

The Cytoplasmic segment spans residues 1-40 (MVEDKKTDDYTIEMDKMDQGSKNFEAAAPPPQPRTPPAGS). The chain crosses the membrane as a helical span at residues 41-61 (ISNNPILPVLAYCGSSILMTV). Residues 62-69 (MNKYVLSG) lie on the Lumenal side of the membrane. Residues 70-90 (LDFNLNFFLLCVQSIVCIVAI) form a helical membrane-spanning segment. Over 91 to 110 (QTCKSCGLITYRDFSADEAR) the chain is Cytoplasmic. A helical transmembrane segment spans residues 111-127 (KWFPITLLLIGMIYTGS). The Lumenal portion of the chain corresponds to 128–134 (KALQFLS). The chain crosses the membrane as a helical span at residues 135–151 (IPVYTIFKNLTIILIAY). Over 152–160 (GEVLWFGGS) the chain is Cytoplasmic. A helical membrane pass occupies residues 161 to 182 (VTGLTLFSFGLMVLSSIIAAWA). Over 183 to 200 (DIKHAVESTGDATAKVST) the chain is Lumenal. Residues 201–221 (LNAGYIWMLVNCLCTSSYVLG) traverse the membrane as a helical segment. The Cytoplasmic segment spans residues 222 to 236 (MRKRIKLTNFKDFDT). The helical transmembrane segment at 237 to 257 (LAMFYNNLLSIPVLIVLTGLM) threads the bilayer. Residues 258–276 (EDWSSANITRNFPPADRNN) lie on the Lumenal side of the membrane. A glycan (N-linked (GlcNAc...) asparagine) is linked at Asn264. A helical membrane pass occupies residues 277-297 (IIFAMILSGLSSVFISYTSAW). At 298 to 305 (CVRVTSST) the chain is on the cytoplasmic side. The helical transmembrane segment at 306-326 (TYSMVGALNKLPIALSGLIFF) threads the bilayer. Topologically, residues 327 to 329 (DAP) are lumenal. Residues 330 to 350 (VTFPSVSAIVVGFVSGIVYAV) form a helical membrane-spanning segment. At 351–384 (AKIKQNAKPKTGVLPMSNPPVSASSQSMRDSLRS) the chain is on the cytoplasmic side. The disordered stretch occupies residues 364 to 384 (LPMSNPPVSASSQSMRDSLRS). A compositionally biased stretch (polar residues) spans 369-384 (PPVSASSQSMRDSLRS).

The protein belongs to the TPT transporter family. SLC35D subfamily. Homooligomer.

Its subcellular location is the golgi apparatus membrane. The protein localises to the cytoplasmic vesicle membrane. It localises to the endoplasmic reticulum membrane. Functionally, involved in the import of GDP-mannose from the cytoplasm into the Golgi lumen. This is GDP-mannose transporter (gmt1) from Aspergillus terreus (strain NIH 2624 / FGSC A1156).